Here is a 568-residue protein sequence, read N- to C-terminus: DNA ligase 2 (568 aa).

ATP is bound at residue Glu254. Catalysis depends on Lys256, which acts as the N6-AMP-lysine intermediate. 6 residues coordinate ATP: Arg261, Arg276, Glu306, Phe346, Arg425, and Lys431.

It belongs to the ATP-dependent DNA ligase family. Mg(2+) serves as cofactor.

It carries out the reaction ATP + (deoxyribonucleotide)n-3'-hydroxyl + 5'-phospho-(deoxyribonucleotide)m = (deoxyribonucleotide)n+m + AMP + diphosphate.. In terms of biological role, DNA ligase that seals nicks in double-stranded DNA during DNA replication, DNA recombination and DNA repair. The chain is DNA ligase 2 from Methanosarcina acetivorans (strain ATCC 35395 / DSM 2834 / JCM 12185 / C2A).